Here is a 253-residue protein sequence, read N- to C-terminus: 5'-nucleotidase SurE 2 (253 aa).

Residues Asp-8, Asp-9, Ser-39, and Asn-92 each contribute to the a divalent metal cation site.

Belongs to the SurE nucleotidase family. A divalent metal cation is required as a cofactor.

The protein resides in the cytoplasm. The catalysed reaction is a ribonucleoside 5'-phosphate + H2O = a ribonucleoside + phosphate. Functionally, nucleotidase that shows phosphatase activity on nucleoside 5'-monophosphates. In Burkholderia lata (strain ATCC 17760 / DSM 23089 / LMG 22485 / NCIMB 9086 / R18194 / 383), this protein is 5'-nucleotidase SurE 2.